Here is a 166-residue protein sequence, read N- to C-terminus: NADH-ubiquinone oxidoreductase chain 6 (166 aa).

Helical transmembrane passes span 1–21 (MMYFIYLLSVMLVLSFMAFAS), 26–46 (IYGGLSLVLSGGVGCGIIVSL), 47–67 (GGSFLGLIVFLVYLGGMLVVF), 86–106 (TVVLNLAIMVGMLGVVWYEFF), and 139–159 (CGGWELVFSGWILFLTIFVVL).

It belongs to the complex I subunit 6 family. In terms of assembly, core subunit of respiratory chain NADH dehydrogenase (Complex I) which is composed of 45 different subunits.

The protein localises to the mitochondrion inner membrane. The enzyme catalyses a ubiquinone + NADH + 5 H(+)(in) = a ubiquinol + NAD(+) + 4 H(+)(out). Its function is as follows. Core subunit of the mitochondrial membrane respiratory chain NADH dehydrogenase (Complex I) which catalyzes electron transfer from NADH through the respiratory chain, using ubiquinone as an electron acceptor. Essential for the catalytic activity and assembly of complex I. The chain is NADH-ubiquinone oxidoreductase chain 6 (MT-ND6) from Tachyglossus aculeatus aculeatus (Southeast Australian short-beaked echidna).